Consider the following 198-residue polypeptide: HTH-type transcriptional regulator BetI (198 aa).

In terms of domain architecture, HTH tetR-type spans 8-68 (PLRRRELIDA…ATMRHLLREL (61 aa)). The H-T-H motif DNA-binding region spans 31-50 (TVAQIAHEAGVSPALAHHYF).

Its pathway is amine and polyamine biosynthesis; betaine biosynthesis via choline pathway [regulation]. Functionally, repressor involved in the biosynthesis of the osmoprotectant glycine betaine. It represses transcription of the choline transporter BetT and the genes of BetAB involved in the synthesis of glycine betaine. In Brucella melitensis biotype 2 (strain ATCC 23457), this protein is HTH-type transcriptional regulator BetI.